The sequence spans 378 residues: 1-acyl-sn-glycerol-3-phosphate acyltransferase delta (378 aa).

Residues 11 to 31 (FLCHLVFCYVFIASGLIINTI) form a helical membrane-spanning segment. Residues 96–101 (HKFEID) carry the HXXXXD motif motif. The next 3 membrane-spanning stretches (helical) occupy residues 125–145 (ELAYVPIIGWMWYFTEMVFCS), 307–327 (TLVNWLFWASLVLYPFFQFLV), and 338–358 (LASFILVFFVASVGVRWMIGV).

Belongs to the 1-acyl-sn-glycerol-3-phosphate acyltransferase family. As to expression, widely expressed with highest levels in skeletal muscle, followed by heart, liver, prostate and thymus.

The protein localises to the endoplasmic reticulum membrane. It carries out the reaction a 1-acyl-sn-glycero-3-phosphate + an acyl-CoA = a 1,2-diacyl-sn-glycero-3-phosphate + CoA. It catalyses the reaction (4Z,7Z,10Z,13Z,16Z,19Z)-docosahexaenoyl-CoA + 1-hexadecanoyl-sn-glycero-3-phosphate = 1-hexadecanoyl-2-(4Z,7Z,10Z,13Z,16Z,19Z-docosahexaenoyl)-sn-glycero-3-phosphate + CoA. The enzyme catalyses 1-octadecanoyl-sn-glycero-3-phosphate + (9Z,12Z)-octadecadienoyl-CoA = 1-octadecanoyl-2-(9Z,12Z-octadecadienoyl)-sn-glycero-3-phosphate + CoA. The catalysed reaction is 1-octadecanoyl-sn-glycero-3-phosphate + (4Z,7Z,10Z,13Z,16Z,19Z)-docosahexaenoyl-CoA = 1-octadecanoyl-2-(4Z,7Z,10Z,13Z,16Z,19Z-docosahexaenoyl)-sn-glycero-3-phosphate + CoA. It carries out the reaction (4Z,7Z,10Z,13Z,16Z,19Z)-docosahexaenoyl-CoA + 1-(9Z-octadecenoyl)-sn-glycero-3-phosphate = 1-(9Z-octadecenoyl)-2-(4Z,7Z,10Z,13Z,16Z,19Z-docosahexaenoyl)-sn-glycero-3-phosphate + CoA. The protein operates within phospholipid metabolism; CDP-diacylglycerol biosynthesis; CDP-diacylglycerol from sn-glycerol 3-phosphate: step 2/3. Converts 1-acyl-sn-glycerol-3-phosphate (lysophosphatidic acid or LPA) into 1,2-diacyl-sn-glycerol-3-phosphate (phosphatidic acid or PA) by incorporating an acyl moiety at the sn-2 position of the glycerol backbone. Exhibits high acyl-CoA specificity for polyunsaturated fatty acyl-CoA, especially docosahexaenoyl-CoA (22:6-CoA, DHA-CoA). This chain is 1-acyl-sn-glycerol-3-phosphate acyltransferase delta (AGPAT4), found in Homo sapiens (Human).